The following is a 371-amino-acid chain: MANIDFSAEIRALRATYESIERVTDMEALREDIAELSERAGEPDLWDDPAAAQKITSRLSHRQSELERLTTLASRIDDLEVLVELGQDEGDADSMGEAAAELESIQKALKNLEVVTLLSGEYDEREAVVSIRAGAGGVDAADFAEMLMRMYLRWAERHGYPTTVMDTSYAEEAGLKSATFEVKAPYAFGTLSVEAGTHRLVRISPFDNQGRRQTSFAAVEVIPLIEQTDSIDIPDNEIRVDVFRSSGPGGQSVNTTDSAVRLTHIPTGVVVSMQNEKSQLQNRAAAMRVLQSRLLLLKKEQEDAEKKALAGDVKASWGDQMRSYVLNPYQMVKDLRTEHEVGNTSAVFDGEIDDFIDAGIRWRTDNRNAEK.

N5-methylglutamine is present on Gln251.

This sequence belongs to the prokaryotic/mitochondrial release factor family. Post-translationally, methylated by PrmC. Methylation increases the termination efficiency of RF2.

It localises to the cytoplasm. In terms of biological role, peptide chain release factor 2 directs the termination of translation in response to the peptide chain termination codons UGA and UAA. The chain is Peptide chain release factor 2 from Pseudarthrobacter chlorophenolicus (strain ATCC 700700 / DSM 12829 / CIP 107037 / JCM 12360 / KCTC 9906 / NCIMB 13794 / A6) (Arthrobacter chlorophenolicus).